Here is a 119-residue protein sequence, read N- to C-terminus: Large ribosomal subunit protein uL24 (119 aa).

This sequence belongs to the universal ribosomal protein uL24 family. Part of the 50S ribosomal subunit.

Functionally, one of two assembly initiator proteins, it binds directly to the 5'-end of the 23S rRNA, where it nucleates assembly of the 50S subunit. One of the proteins that surrounds the polypeptide exit tunnel on the outside of the subunit. The sequence is that of Large ribosomal subunit protein uL24 from Sulfurihydrogenibium sp. (strain YO3AOP1).